A 210-amino-acid chain; its full sequence is Large ribosomal subunit protein uL3 (210 aa).

The segment at 120 to 143 (FQGNIKKDGQSRGPMGHGSRYHRR) is disordered.

Belongs to the universal ribosomal protein uL3 family. As to quaternary structure, part of the 50S ribosomal subunit. Forms a cluster with proteins L14 and L19.

Functionally, one of the primary rRNA binding proteins, it binds directly near the 3'-end of the 23S rRNA, where it nucleates assembly of the 50S subunit. The polypeptide is Large ribosomal subunit protein uL3 (Latilactobacillus sakei subsp. sakei (strain 23K) (Lactobacillus sakei subsp. sakei)).